The following is a 132-amino-acid chain: Phosphomevalonate dehydratase small subunit (132 aa).

Ser-58 serves as the catalytic Proton acceptor.

It belongs to the AcnX type II small subunit family. In terms of assembly, heterodimer composed of a large subunit (PMDh-L) and a small subunit (PMDh-S).

It catalyses the reaction (R)-5-phosphomevalonate = (2E)-3-methyl-5-phosphooxypent-2-enoate + H2O. Its pathway is isoprenoid biosynthesis; isopentenyl diphosphate biosynthesis via mevalonate pathway. Its activity is regulated as follows. Neither the addition of 1 mM Mg(2+) nor 1 mM Mn(2+) has a significant effect on the activity, whereas Zn(2+) causes almost complete inactivation. Strongly inhibited by H(2)O(2), but not by EDTA or iodoacetamide. Functionally, component of a hydro-lyase that catalyzes the dehydration of mevalonate 5-phosphate (MVA5P) to form trans-anhydromevalonate 5-phosphate (tAHMP). Involved in the archaeal mevalonate (MVA) pathway, which provides fundamental precursors for isoprenoid biosynthesis, such as isopentenyl diphosphate (IPP) and dimethylallyl diphosphate (DMAPP). The sequence is that of Phosphomevalonate dehydratase small subunit from Aeropyrum pernix (strain ATCC 700893 / DSM 11879 / JCM 9820 / NBRC 100138 / K1).